The chain runs to 119 residues: Large ribosomal subunit protein uL18 (119 aa).

Belongs to the universal ribosomal protein uL18 family. Part of the 50S ribosomal subunit; part of the 5S rRNA/L5/L18/L25 subcomplex. Contacts the 5S and 23S rRNAs.

Its function is as follows. This is one of the proteins that bind and probably mediate the attachment of the 5S RNA into the large ribosomal subunit, where it forms part of the central protuberance. The protein is Large ribosomal subunit protein uL18 of Nitratidesulfovibrio vulgaris (strain DSM 19637 / Miyazaki F) (Desulfovibrio vulgaris).